A 322-amino-acid polypeptide reads, in one-letter code: HPr kinase/phosphorylase (322 aa).

Active-site residues include His-146 and Lys-167. Gly-161–Ser-168 serves as a coordination point for ATP. Residue Ser-168 coordinates Mg(2+). Asp-185 acts as the Proton acceptor; for phosphorylation activity. Proton donor; for dephosphorylation activity in catalysis. Positions Leu-209–Asp-218 are important for the catalytic mechanism of both phosphorylation and dephosphorylation. Residue Glu-210 coordinates Mg(2+). The active site involves Arg-250. Residues Gln-271 to Arg-276 are important for the catalytic mechanism of dephosphorylation.

The protein belongs to the HPrK/P family. Homohexamer. Requires Mg(2+) as cofactor.

The catalysed reaction is [HPr protein]-L-serine + ATP = [HPr protein]-O-phospho-L-serine + ADP + H(+). It carries out the reaction [HPr protein]-O-phospho-L-serine + phosphate + H(+) = [HPr protein]-L-serine + diphosphate. Functionally, catalyzes the ATP- as well as the pyrophosphate-dependent phosphorylation of a specific serine residue in HPr, a phosphocarrier protein of the phosphoenolpyruvate-dependent sugar phosphotransferase system (PTS). HprK/P also catalyzes the pyrophosphate-producing, inorganic phosphate-dependent dephosphorylation (phosphorolysis) of seryl-phosphorylated HPr (P-Ser-HPr). This is HPr kinase/phosphorylase from Burkholderia lata (strain ATCC 17760 / DSM 23089 / LMG 22485 / NCIMB 9086 / R18194 / 383).